The sequence spans 280 residues: Beta carbonic anhydrase 4 (280 aa).

Ala2 carries the N-acetylalanine modification. A coiled-coil region spans residues 47 to 76 (NVAAAKIKALTAELKELDSSNSDAIERIKT). Residue Thr57 is modified to Phosphothreonine. Ser117 bears the Phosphoserine mark. Cys223 carries the post-translational modification S-nitrosocysteine.

It belongs to the beta-class carbonic anhydrase family. As to quaternary structure, interacts with DTX56. As to expression, strongly expressed in aerial tissues including leaves, stems, flowers and siliques. Accumulates in both guard cells and mesophyll cells.

It is found in the cell membrane. The catalysed reaction is hydrogencarbonate + H(+) = CO2 + H2O. Its function is as follows. Reversible hydration of carbon dioxide. Together with BCA1, involved in the CO(2) signaling pathway which controls gas-exchange between plants and the atmosphere by modulating stomatal development and movements. Promotes water use efficiency. The polypeptide is Beta carbonic anhydrase 4 (Arabidopsis thaliana (Mouse-ear cress)).